A 238-amino-acid chain; its full sequence is DNA repair protein RecO (238 aa).

This sequence belongs to the RecO family.

Involved in DNA repair and RecF pathway recombination. This Flavobacterium psychrophilum (strain ATCC 49511 / DSM 21280 / CIP 103535 / JIP02/86) protein is DNA repair protein RecO.